We begin with the raw amino-acid sequence, 518 residues long: GMP synthase [glutamine-hydrolyzing] (518 aa).

The Glutamine amidotransferase type-1 domain maps to 8–201; that stretch reads TVLIIDFGSQ…VLKISNLKGN (194 aa). Catalysis depends on C85, which acts as the Nucleophile. Catalysis depends on residues H175 and E177. In terms of domain architecture, GMPS ATP-PPase spans 202–393; the sequence is WSMASYREQT…LGLPEQFIGR (192 aa). Residue 229–235 coordinates ATP; that stretch reads SGGVDSS.

As to quaternary structure, homodimer.

It catalyses the reaction XMP + L-glutamine + ATP + H2O = GMP + L-glutamate + AMP + diphosphate + 2 H(+). It functions in the pathway purine metabolism; GMP biosynthesis; GMP from XMP (L-Gln route): step 1/1. Catalyzes the synthesis of GMP from XMP. This is GMP synthase [glutamine-hydrolyzing] from Bartonella henselae (strain ATCC 49882 / DSM 28221 / CCUG 30454 / Houston 1) (Rochalimaea henselae).